The following is a 2210-amino-acid chain: MEEHVNELHDLVRKWVSDDENFAEQKAIFLSQTKLRAITIEGLKLLSTIVEVDSCQKNSCIHNREKTLNSILRDNKIVCPTLPEIVPDGYRLIGDVLILLEVFVRSNQESFEKKYEQDYTKLMQVKKDLQSHGITLVPMIDGRSSYYVEFMPDWVVEKIRWHLIKLMDLLKEDGESVEELEYERLVSSLSALENQSLGLESLLSIKERGIEYIDRLTKIMYGNLNNNMSVDECKGEILRIYQNFRQLFDQGQFKPKYRKTDREFILKTLREHGLIKCAIMSEEDSCKNCMIHMFKVLTIIKQSFVSNKNIESSFILKEYNQLLSVCNKVKSLKVLNTRRGTLMVLDLIMLNKLLSLIKIYGIKAALTILRMQCIPAVNDRLLSIDFLISIYERKMIKSPKWLEKVHGKLKRVVQDCMFKALEDYLVEIDFDTWFSIKDELLMTQQFKPSICYRSSKGCVCNAETLKNLSMMTEEDFLSYLKILSSLSLSLVNSMKTSSAPKSKINQANDFYGIVHCEEVYFQGFGDNNACTLLYQKTGEKSRCYSVAFSDNEQQIDYGSKISFYADPKRFFLPIMSQDVLNRMCNEMLSWLDFLSDDNIKVVADLLRKLILCVLCTPSKRVQVYLQGFRYLIMAYVNEIHCNDLFAKLEVDALTASERQVMIWMDDLTRIVLEMSKEADMAKSFKFILNLSYLCHLITKETPDRLTDQIKCFEKFLEPKLKFGSLMVNPDSTPELTSEQEDQVCEGLHRLLNKKIFSKCENIPGVSKELVSLCSSLFNSSNLEVKPLLNHDPLTPSFTSTALDLSSNKSVVVPKLNEIGETLTEYDFGKIVSSVVVDLTEHFKTKGKYKLDPRDLRFRIFKKLSSLVEVNPTKKSNRKSESGEVVAPDESFMDELTEEQQLMLSEIEVKVSKTFEGMSKDELNRKQSKEKGAEAHLKRLWSKEVRDKISSETSLHEVKDFDVQLFPFDTYEELVTIVFNDKSAHDFYFLEKYLNPCPLDMLMKNLTLKAFNEGDFFECFKYILIASEFDNKIGRYDHKIRTRLGLKDPALKIREEARISTRESNSESIAKRLDKSFFTNSSLRNLCFYSDESPTTRTGVATDVGKLKFGLSYKEQVGGNRELYVGDLNTKLITRLVEDYAESICSNMKYTCLNSESEFERALLDMKSVVRQGGFAVSMDHSKWGPHMSPAIFAQLLRCLKFRLKDGSEIDKKAVLNILYWHLHKIVEVPFNVVQAFMSGFVKRGLGLMDRGGATLSEEFMFGFFEKGVVPSHLSSVVDMGQGILHNMSDLYGLITEQFINYVLDFCYNVSMTSYTSSDDEIMLSTSSALNHEDGSLNVDVALEILEFHNFLSDKLNKFVSPKTVAGTFASEFKSRFFIWSQEVPLLTKFVAAALHNIKAKAPNQLAETVDTILDQCVANGVSIEIVGAISKRTNSLVCYSGHPLNPFLCLEESDVRDWVDGSRGYRLQRSIENIFPDDLCPNLIRDACRKVFHRIQSGKIEEEFLVASIQGSPDECLNSMLTIADVDEDIKKDLAGYRWLNLRAYGDLRLVLRTKLMSSTRTLQREEIPSLVRSVQSKLSKNFVRGAKRILTDAINKSAFQSCISSGFIGVCKSMGSKCVRDNTGGFVYIKEITKHVMPHTTSYCPYCKPSKNIYCEDALRSVSEYSRPIFWDYFSLVLSNACELGNWVFGAPILPKTVFHLDNPNHFWPIKPSSQTELEDKVGMNHVLYSIRRNYPSIFDEHISPYMSDLNMLRLSWVQKIKFLDLCVALDMSSECLGIISHIMRRKREELYIVKQQELSMSHTRESTNLESGLSLEPQEVCKNFLLQVLFDSMVNPVLLTTSQFRKYFWYGEVLQLPNDASHHLAQFTQFILDCKQLNSSRAMTLDDLDVGYVTSRVKRTTTFVALSTFITSLDWENRHEYKSFQELILSSPCDVFKFEFSMTFSHIRSSHKFRYERCTSYILKVHVVFDKRVLNSNMLEDQSLLITPHSVEYFVSQSGGNHISLDGVGLLPLDPLISGKEVLNIDDVLRHEDVNFSAESPLFSKMRFDFKPFLKELKNKFSYKLIGPDIIMEPLVLDKGQIKEGSRIVSQLKLRLDFKAVFVALGCLEEESRSTFISNLFMYIGSLRGEEHRISMTESNLVQLIDNYPQVFDSMLDATNDWLNCGSFSLCKSKSLGCVMIADERGPFKLKGVNCRRLLPDSQAVEID.

An endonuclease region spans residues 26-285 (KAIFLSQTKL…KCAIMSEEDS (260 aa)). Residues Glu51, Asp88, and Glu101 each contribute to the Mn(2+) site. Lys114 is an active-site residue. One can recognise a RdRp catalytic domain in the interval 1163–1359 (LDMKSVVRQG…FLSDKLNKFV (197 aa)). Residue Asp1319 coordinates Mg(2+).

It belongs to the Bunyavirales RNA polymerase family. Homomultimer; the oligomeric structure is essential for the polymerase activity. Interacts with nucleoprotein N. Interacts with protein Z; this interaction inhibits viral transcription and replication, Z partially blocks the product exit tunnel for the releasing nascent RNA product. Mn(2+) serves as cofactor. Requires Mg(2+) as cofactor.

It localises to the virion. It is found in the host cytoplasm. The catalysed reaction is RNA(n) + a ribonucleoside 5'-triphosphate = RNA(n+1) + diphosphate. In terms of biological role, RNA-dependent RNA polymerase, which is responsible for the replication and transcription of the viral RNA genome using antigenomic RNA as an intermediate. During transcription, synthesizes subgenomic RNAs and assures their capping by a cap-snatching mechanism, which involves the endonuclease activity cleaving the host capped pre-mRNAs. These short capped RNAs are then used as primers for viral transcription. The 3'-end of subgenomic mRNAs molecules are heterogeneous and not polyadenylated. The replicase function is to direct synthesis of antigenomic and genomic RNA which are encapsidated and non capped. As a consequence of the use of the same enzyme for both transcription and replication, these mechanisms need to be well coordinated. These processes may be regulated by proteins N and Z in a dose-dependent manner. Z protein inhibits the viral polymerase L und thus the viral transcription and RNA synthesis. In Sigmodon alstoni (PIRV), this protein is RNA-directed RNA polymerase L.